The chain runs to 250 residues: MPLYRARPRSLYSRRRRATNRRRRYRRRRLHIGRIRSKYTIFNVKQTQNISFTFFGTGSPDKNKWQAMSLEAVQSSGTSPKPGINLRFAVFGDRLPGTGNQYHYPFDYYMIRMVKVELRPAFNPFQRVRTQGSTYIDKEGNITTTTSGGEWNVDPYAAMSSRKTWSPHRYHKRVFVPKPTIQQGGTGTNIWSTWYTPGGRQLWLNSIQDNVVFYGMGMSLRQAEDTAAPLTVEATITYYIRFGQWTGLSP.

Positions 1–24 (MPLYRARPRSLYSRRRRATNRRRR) are disordered. Positions 1-38 (MPLYRARPRSLYSRRRRATNRRRRYRRRRLHIGRIRSK) are DNA-binding. Residues 5–38 (RARPRSLYSRRRRATNRRRRYRRRRLHIGRIRSK) form a nuclear localization signals region.

Belongs to the circoviridae capsid protein family. In terms of assembly, homomultimer. Assembles in the nucleus, presumably in an immature form, then migrates to the cytoplasm once assembled as mature virion. Interacts with Rep; this interaction relocates Rep into the nucleus.

Its subcellular location is the host nucleus. The protein resides in the virion. Functionally, self-assembles to form the virion icosahedral capsid with a T=1 symmetry. This very small capsid (17 - 22 nm in diameter) allows the virus to be very stable in the environment and resistant to some disinfectants, including detergents. Essential for the initial attachment to heparan sulfate moieties and chondroitin sulfate B of the host cell surface proteoglycans. After attachment, the virus is endocytosed and traffics to the nucleus. The capsid protein binds and transports the viral genome and Rep across the nuclear envelope. In Anser (geese), this protein is Probable capsid protein (Cap).